A 124-amino-acid chain; its full sequence is Hemoglobin subunit alpha (124 aa).

Residues 1 to 124 (PLSAADKTII…VAKALSSHYR (124 aa)) form the Globin domain. Histidine 57 lines the O2 pocket. Histidine 79 provides a ligand contact to heme b.

It belongs to the globin family. Hb 1 is a heterotetramer of two alpha and two beta-1 chains. Hb 2 is a heterotetramer of two alpha and two beta-2 chains. Hb 3 is a heterotetramer of two alpha and two beta-3 chains. As to expression, red blood cells (at protein level).

Its function is as follows. Involved in oxygen transport from gills to the various peripheral tissues. This chain is Hemoglobin subunit alpha, found in Somniosus microcephalus (Greenland sleeper shark).